The chain runs to 246 residues: Ribonuclease PH (246 aa).

The tract at residues 1–33 (MTPPKLPVREGRDALTPRPVSVQRGVNPHAPGS) is disordered. Residues Arg90 and 128–130 (GTR) contribute to the phosphate site.

Belongs to the RNase PH family. Homohexameric ring arranged as a trimer of dimers.

It catalyses the reaction tRNA(n+1) + phosphate = tRNA(n) + a ribonucleoside 5'-diphosphate. Its function is as follows. Phosphorolytic 3'-5' exoribonuclease that plays an important role in tRNA 3'-end maturation. Removes nucleotide residues following the 3'-CCA terminus of tRNAs; can also add nucleotides to the ends of RNA molecules by using nucleoside diphosphates as substrates, but this may not be physiologically important. Probably plays a role in initiation of 16S rRNA degradation (leading to ribosome degradation) during starvation. This is Ribonuclease PH from Deinococcus radiodurans (strain ATCC 13939 / DSM 20539 / JCM 16871 / CCUG 27074 / LMG 4051 / NBRC 15346 / NCIMB 9279 / VKM B-1422 / R1).